An 861-amino-acid polypeptide reads, in one-letter code: DNA mismatch repair protein MutS (861 aa).

614 to 621 (GPNMGGKS) lines the ATP pocket.

This sequence belongs to the DNA mismatch repair MutS family.

This protein is involved in the repair of mismatches in DNA. It is possible that it carries out the mismatch recognition step. This protein has a weak ATPase activity. This is DNA mismatch repair protein MutS from Mannheimia succiniciproducens (strain KCTC 0769BP / MBEL55E).